A 159-amino-acid chain; its full sequence is Cyclic pyranopterin monophosphate synthase (159 aa).

Substrate is bound by residues 75–77 (LCH) and 113–114 (ME). D128 is a catalytic residue.

The protein belongs to the MoaC family. In terms of assembly, homohexamer; trimer of dimers.

The enzyme catalyses (8S)-3',8-cyclo-7,8-dihydroguanosine 5'-triphosphate = cyclic pyranopterin phosphate + diphosphate. It participates in cofactor biosynthesis; molybdopterin biosynthesis. Its function is as follows. Catalyzes the conversion of (8S)-3',8-cyclo-7,8-dihydroguanosine 5'-triphosphate to cyclic pyranopterin monophosphate (cPMP). The protein is Cyclic pyranopterin monophosphate synthase of Photorhabdus laumondii subsp. laumondii (strain DSM 15139 / CIP 105565 / TT01) (Photorhabdus luminescens subsp. laumondii).